We begin with the raw amino-acid sequence, 123 residues long: Ribosome-binding factor A (123 aa).

It belongs to the RbfA family. Monomer. Binds 30S ribosomal subunits, but not 50S ribosomal subunits or 70S ribosomes.

It is found in the cytoplasm. Functionally, one of several proteins that assist in the late maturation steps of the functional core of the 30S ribosomal subunit. Associates with free 30S ribosomal subunits (but not with 30S subunits that are part of 70S ribosomes or polysomes). Required for efficient processing of 16S rRNA. May interact with the 5'-terminal helix region of 16S rRNA. The chain is Ribosome-binding factor A from Ralstonia nicotianae (strain ATCC BAA-1114 / GMI1000) (Ralstonia solanacearum).